The following is a 209-amino-acid chain: 8-oxoguanine DNA glycosylase/AP lyase (209 aa).

Residues Lys131 and Asp149 contribute to the active site.

Belongs to the type-2 OGG1 family.

It catalyses the reaction 2'-deoxyribonucleotide-(2'-deoxyribose 5'-phosphate)-2'-deoxyribonucleotide-DNA = a 3'-end 2'-deoxyribonucleotide-(2,3-dehydro-2,3-deoxyribose 5'-phosphate)-DNA + a 5'-end 5'-phospho-2'-deoxyribonucleoside-DNA + H(+). In terms of biological role, catalyzes the excision of an oxidatively damaged form of guanine (7,8-dihydro-8-oxoguanine = 8-oxoG) from DNA. Also cleaves the DNA backbone at apurinic/apyrimidinic sites (AP sites). The protein is 8-oxoguanine DNA glycosylase/AP lyase of Korarchaeum cryptofilum (strain OPF8).